Here is an 883-residue protein sequence, read N- to C-terminus: Bifunctional heparan sulfate N-deacetylase/N-sulfotransferase 2 (883 aa).

Residues 1-18 (MLQLWKVVRPARQLELHR) are Cytoplasmic-facing. The helical; Signal-anchor for type II membrane protein transmembrane segment at 19-39 (LILLLIGFSLVSMGFLAYYVS) threads the bilayer. At 40–883 (TSPKAKEPLP…REELQHSSVG (844 aa)) the chain is on the lumenal side. Positions 41-597 (SPKAKEPLPL…KRHKDIWSKE (557 aa)) are heparan sulfate N-deacetylase 2. A disordered region spans residues 49 to 82 (PLPLGDCSSSGAAGPGPARPPVPPRPQRPPETTR). Residues 65-77 (PARPPVPPRPQRP) show a composition bias toward pro residues. 3 N-linked (GlcNAc...) asparagine glycosylation sites follow: N233, N350, and N400. The heparan sulfate N-sulfotransferase 2 stretch occupies residues 598-883 (KTCDRLPKFL…REELQHSSVG (286 aa)). K613 serves as the catalytic For sulfotransferase activity. 613–617 (KTGTT) contacts 3'-phosphoadenylyl sulfate. N-linked (GlcNAc...) asparagine glycosylation is present at N666. S711 lines the 3'-phosphoadenylyl sulfate pocket. Residues N726 and N802 are each glycosylated (N-linked (GlcNAc...) asparagine). C817 and C827 are disulfide-bonded. A 3'-phosphoadenylyl sulfate-binding site is contributed by 832–836 (KGRRY).

The protein belongs to the sulfotransferase 1 family. NDST subfamily. As to quaternary structure, monomer. As to expression, widely expressed in adult and throughout development.

Its subcellular location is the golgi apparatus membrane. The enzyme catalyses alpha-D-glucosaminyl-[heparan sulfate](n) + 3'-phosphoadenylyl sulfate = N-sulfo-alpha-D-glucosaminyl-[heparan sulfate](n) + adenosine 3',5'-bisphosphate + 2 H(+). It participates in glycan metabolism; heparan sulfate biosynthesis. The protein operates within glycan metabolism; heparin biosynthesis. In terms of biological role, essential bifunctional enzyme that catalyzes both the N-deacetylation and the N-sulfation of glucosamine (GlcNAc) of the glycosaminoglycan in heparan sulfate. Modifies the GlcNAc-GlcA disaccharide repeating sugar backbone to make N-sulfated heparosan, a prerequisite substrate for later modifications in heparin biosynthesis. Plays a role in determining the extent and pattern of sulfation of heparan sulfate. Required for the exosomal release of SDCBP, CD63 and syndecan. The chain is Bifunctional heparan sulfate N-deacetylase/N-sulfotransferase 2 (Ndst2) from Mus musculus (Mouse).